Consider the following 153-residue polypeptide: MATKIRLKRQGKKFYAFYRVVVVDSRKKRDGKVIEEIGTYNPNTQPSTIQIKSDRAQYWLGVGAQPSEPVFKLLNITGDWQKYKGLEGAEGTLKTVEAGPDAEARIAAVENQAQKLKAAKAEAAAKAKAEAEAAAAAEEAPAEEAAEEAPAED.

The span at 121-131 (AEAAAKAKAEA) shows a compositional bias: basic and acidic residues. The segment at 121-153 (AEAAAKAKAEAEAAAAAEEAPAEEAAEEAPAED) is disordered. Residues 140–153 (APAEEAAEEAPAED) show a composition bias toward acidic residues.

It belongs to the bacterial ribosomal protein bS16 family.

The protein is Small ribosomal subunit protein bS16 of Bifidobacterium longum (strain DJO10A).